We begin with the raw amino-acid sequence, 1472 residues long: ABC multidrug transporter atrI (1472 aa).

The segment at 1–28 (MRRSNVVPVHSLTSSTNTGRDSRGEKYD) is disordered. The region spanning 134–384 (FRRETWNFRN…FERQGWFCPP (251 aa)) is the ABC transporter 1 domain. Residues Asn143, Asn277, Asn308, and Asn332 are each glycosylated (N-linked (GlcNAc...) asparagine). 7 helical membrane passes run 506-526 (ILAL…AGFY), 530-550 (ATLF…INSL), 580-600 (IPVK…LSGL), 605-625 (SQFF…SAVF), 639-659 (MTLA…VVPV), 664-684 (PWFK…ILIA), and 744-764 (FGIL…ATEL). Residues 784–793 (AHLKNGHEPG) show a composition bias toward basic and acidic residues. The segment at 784-821 (AHLKNGHEPGADEEAGAGKTVVSSSAEENKQDQGITSI) is disordered. The span at 804-821 (VVSSSAEENKQDQGITSI) shows a compositional bias: polar residues. In terms of domain architecture, ABC transporter 2 spans 828-1070 (FTWRDVVYDI…TLLKYFESHG (243 aa)). ATP is bound at residue 864 to 871 (GVSGAGKT). Helical transmembrane passes span 1168–1188 (YIAA…FSFF), 1204–1224 (VFML…LFIT), 1244–1264 (FMIA…ILVF), 1282–1302 (LVLL…DFVI), 1309–1329 (ETAG…NGVM), and 1337–1357 (GFWI…GMAA). Asn1402 carries N-linked (GlcNAc...) asparagine glycosylation. The chain crosses the membrane as a helical span at residues 1433 to 1453 (FGIFWAYVVFDIAVAVMLYYC). Asn1460 is a glycosylation site (N-linked (GlcNAc...) asparagine).

The protein belongs to the ABC transporter superfamily. ABCG family. PDR (TC 3.A.1.205) subfamily.

The protein localises to the cell membrane. The catalysed reaction is itraconazole(in) + ATP + H2O = itraconazole(out) + ADP + phosphate + H(+). The enzyme catalyses voriconazole(in) + ATP + H2O = voriconazole(out) + ADP + phosphate + H(+). It catalyses the reaction fluconazole(in) + ATP + H2O = fluconazole(out) + ADP + phosphate + H(+). Pleiotropic ABC efflux transporter involved in the basal level of azole susceptibility. Confers resistance to fluconazole, itraconazole and voriconazole. The sequence is that of ABC multidrug transporter atrI from Aspergillus fumigatus (strain ATCC MYA-4609 / CBS 101355 / FGSC A1100 / Af293) (Neosartorya fumigata).